Consider the following 453-residue polypeptide: Tubulin alpha-1/2/3 chain (453 aa).

Glutamine 11 provides a ligand contact to GTP. Lysine 40 carries the post-translational modification N6-acetyllysine. Positions 71, 140, 144, 145, 179, 206, and 228 each coordinate GTP. Glutamate 71 is a Mg(2+) binding site. Glutamate 254 is an active-site residue. The tract at residues 429 to 453 (EKDYEEVGTESQEGDGEEGEDGGDQ) is disordered. The segment covering 431–453 (DYEEVGTESQEGDGEEGEDGGDQ) has biased composition (acidic residues).

Belongs to the tubulin family. In terms of assembly, dimer of alpha and beta chains. A typical microtubule is a hollow water-filled tube with an outer diameter of 25 nm and an inner diameter of 15 nM. Alpha-beta heterodimers associate head-to-tail to form protofilaments running lengthwise along the microtubule wall with the beta-tubulin subunit facing the microtubule plus end conferring a structural polarity. Microtubules usually have 13 protofilaments but different protofilament numbers can be found in some organisms and specialized cells. Requires Mg(2+) as cofactor. Acetylation of alpha chains at Lys-40 stabilizes microtubules and affects affinity and processivity of microtubule motors. This modification has a role in multiple cellular functions, ranging from cell motility, cell cycle progression or cell differentiation to intracellular trafficking and signaling.

The protein localises to the cytoplasm. It localises to the cytoskeleton. The enzyme catalyses GTP + H2O = GDP + phosphate + H(+). Tubulin is the major constituent of microtubules, a cylinder consisting of laterally associated linear protofilaments composed of alpha- and beta-tubulin heterodimers. Microtubules grow by the addition of GTP-tubulin dimers to the microtubule end, where a stabilizing cap forms. Below the cap, tubulin dimers are in GDP-bound state, owing to GTPase activity of alpha-tubulin. This chain is Tubulin alpha-1/2/3 chain (TBA1), found in Naegleria gruberi (Amoeba).